Reading from the N-terminus, the 324-residue chain is Beta-ketoacyl-[acyl-carrier-protein] synthase III (324 aa).

Active-site residues include cysteine 112 and histidine 249. Positions 250 to 254 are ACP-binding; the sequence is QANRR. Asparagine 279 is an active-site residue.

The protein belongs to the thiolase-like superfamily. FabH family. As to quaternary structure, homodimer.

The protein localises to the cytoplasm. The enzyme catalyses malonyl-[ACP] + acetyl-CoA + H(+) = 3-oxobutanoyl-[ACP] + CO2 + CoA. It participates in lipid metabolism; fatty acid biosynthesis. Catalyzes the condensation reaction of fatty acid synthesis by the addition to an acyl acceptor of two carbons from malonyl-ACP. Catalyzes the first condensation reaction which initiates fatty acid synthesis and may therefore play a role in governing the total rate of fatty acid production. Possesses both acetoacetyl-ACP synthase and acetyl transacylase activities. Its substrate specificity determines the biosynthesis of branched-chain and/or straight-chain of fatty acids. The chain is Beta-ketoacyl-[acyl-carrier-protein] synthase III from Streptococcus pyogenes serotype M6 (strain ATCC BAA-946 / MGAS10394).